Here is a 504-residue protein sequence, read N- to C-terminus: Arabinose import ATP-binding protein AraG (504 aa).

2 ABC transporter domains span residues 8–243 (LSFR…MVGR) and 256–499 (YGEE…MPKV). Residue 40-47 (GENGAGKS) coordinates ATP.

This sequence belongs to the ABC transporter superfamily. Arabinose importer (TC 3.A.1.2.2) family. As to quaternary structure, the complex is composed of two ATP-binding proteins (AraG), two transmembrane proteins (AraH) and a solute-binding protein (AraF).

It is found in the cell inner membrane. The catalysed reaction is L-arabinose(out) + ATP + H2O = L-arabinose(in) + ADP + phosphate + H(+). Its function is as follows. Part of the ABC transporter complex AraFGH involved in arabinose import. Responsible for energy coupling to the transport system. The sequence is that of Arabinose import ATP-binding protein AraG from Shigella dysenteriae serotype 1 (strain Sd197).